The following is a 300-amino-acid chain: Non-secreted LysM effector LysM16 (300 aa).

A LysM domain is found at 176–222 (EWHTVFSGDTCQLIEAEYGITLEKFIALNTYVNSTCGNIWPDYAYCV).

It belongs to the secreted LysM effector family.

Non-secreted LysM effector that might be involved in manipulation of host defenses for successful infection. This is Non-secreted LysM effector LysM16 from Penicillium expansum (Blue mold rot fungus).